A 218-amino-acid chain; its full sequence is Deoxyribose-phosphate aldolase (218 aa).

Residue Asp-92 is the Proton donor/acceptor of the active site. Lys-156 serves as the catalytic Schiff-base intermediate with acetaldehyde. Lys-185 acts as the Proton donor/acceptor in catalysis.

Belongs to the DeoC/FbaB aldolase family. DeoC type 1 subfamily.

It is found in the cytoplasm. It carries out the reaction 2-deoxy-D-ribose 5-phosphate = D-glyceraldehyde 3-phosphate + acetaldehyde. It functions in the pathway carbohydrate degradation; 2-deoxy-D-ribose 1-phosphate degradation; D-glyceraldehyde 3-phosphate and acetaldehyde from 2-deoxy-alpha-D-ribose 1-phosphate: step 2/2. In terms of biological role, catalyzes a reversible aldol reaction between acetaldehyde and D-glyceraldehyde 3-phosphate to generate 2-deoxy-D-ribose 5-phosphate. The polypeptide is Deoxyribose-phosphate aldolase (Desulfitobacterium hafniense (strain Y51)).